The chain runs to 132 residues: Iron-sulfur cluster assembly 1 homolog, mitochondrial (132 aa).

Residues 1–15 constitute a mitochondrion transit peptide; that stretch reads MASSASSVVRATVRA. Residues cysteine 60, cysteine 124, and cysteine 126 each coordinate Fe cation.

This sequence belongs to the HesB/IscA family. As to quaternary structure, homooligomer, forming a rod-shaped structure 24 nm in length that may arise through a double-helical assembly of subunits. Interacts with CRY4; CRY4 seems to be associated with the outside of the rod-shaped homooligomer. Does not interact with CRY1 or CRY2. As to expression, detected in retina, especially in the retinal ganglion layer, the inner nuclear layer and the outer nuclear layer. Detected in retina visual pigment cells (at protein level).

The protein resides in the mitochondrion. Functionally, involved in the maturation of mitochondrial 4Fe-4S proteins functioning late in the iron-sulfur cluster assembly pathway. Probably involved in the binding of an intermediate of Fe/S cluster assembly. Component of a putative magnetoreceptor complex formed by ISCA1 and CRY4, a member of the cryptochrome family that are known to be required for light-dependent magnetosensitivity in various orgnisms. The rod-like assembly may facilitate the perception of the Earth's weak magnetic field. Both ISCA1 and the complex with CRY4 have magnetic properties and are attracted to iron beads. When exposed to a magnetic field of 1 mT (superior to the natural magnetic field), over 50% of the rod-like complexes align more or less in parallel with the magnetic field at room temperature. The protein is Iron-sulfur cluster assembly 1 homolog, mitochondrial (ISCA1) of Columba livia (Rock dove).